We begin with the raw amino-acid sequence, 107 residues long: uncharacterized protein (107 aa).

3 helical membrane-spanning segments follow: residues T15–S35, L43–Y63, and Y87–F107.

The protein localises to the membrane. This is an uncharacterized protein from Saccharomyces cerevisiae (strain ATCC 204508 / S288c) (Baker's yeast).